The primary structure comprises 224 residues: 7-cyano-7-deazaguanine synthase (224 aa).

Residue 10 to 20 participates in ATP binding; the sequence is LSGGLDSATVV. Cysteine 189, cysteine 199, cysteine 202, and cysteine 205 together coordinate Zn(2+).

This sequence belongs to the QueC family. Zn(2+) serves as cofactor.

The enzyme catalyses 7-carboxy-7-deazaguanine + NH4(+) + ATP = 7-cyano-7-deazaguanine + ADP + phosphate + H2O + H(+). It functions in the pathway purine metabolism; 7-cyano-7-deazaguanine biosynthesis. Catalyzes the ATP-dependent conversion of 7-carboxy-7-deazaguanine (CDG) to 7-cyano-7-deazaguanine (preQ(0)). The chain is 7-cyano-7-deazaguanine synthase from Pseudomonas putida (strain ATCC 700007 / DSM 6899 / JCM 31910 / BCRC 17059 / LMG 24140 / F1).